The sequence spans 199 residues: Superoxide dismutase [Mn/Fe] (199 aa).

Fe(3+)-binding residues include H27, H81, D161, and H165. Residues H27, H81, D161, and H165 each contribute to the Mn(2+) site.

The protein belongs to the iron/manganese superoxide dismutase family. As to quaternary structure, homodimer. Mn(2+) is required as a cofactor. Fe(3+) serves as cofactor.

The enzyme catalyses 2 superoxide + 2 H(+) = H2O2 + O2. Functionally, destroys superoxide anion radicals which are normally produced within the cells and which are toxic to biological systems. Catalyzes the dismutation of superoxide anion radicals into O2 and H2O2 by successive reduction and oxidation of the transition metal ion at the active site. This Staphylococcus haemolyticus (strain JCSC1435) protein is Superoxide dismutase [Mn/Fe] (sodA).